The primary structure comprises 327 residues: Phenylalanine--tRNA ligase alpha subunit (327 aa).

Glu-252 serves as a coordination point for Mg(2+).

It belongs to the class-II aminoacyl-tRNA synthetase family. Phe-tRNA synthetase alpha subunit type 1 subfamily. As to quaternary structure, tetramer of two alpha and two beta subunits. It depends on Mg(2+) as a cofactor.

The protein resides in the cytoplasm. The enzyme catalyses tRNA(Phe) + L-phenylalanine + ATP = L-phenylalanyl-tRNA(Phe) + AMP + diphosphate + H(+). The sequence is that of Phenylalanine--tRNA ligase alpha subunit from Shigella sonnei (strain Ss046).